The following is a 216-amino-acid chain: Type-4 uracil-DNA glycosylase (216 aa).

[4Fe-4S] cluster-binding residues include Cys-14 and Cys-17. Residues Gly-41–Ala-43, Phe-55, and Asn-82 contribute to the uracil site. The [4Fe-4S] cluster site is built by Cys-86 and Cys-102. His-164 is a binding site for uracil.

Belongs to the uracil-DNA glycosylase (UDG) superfamily. Type 4 (UDGa) family. Interacts with the sliding clamp PCNA3 subunit.

The enzyme catalyses Hydrolyzes single-stranded DNA or mismatched double-stranded DNA and polynucleotides, releasing free uracil.. Removes uracil bases that are present in DNA as a result of either deamination of cytosine or misincorporation of dUMP instead of dTMP. Can remove uracil from double-stranded DNA containing either a U/G or U/A base pair as well as from single-stranded DNA. This Saccharolobus solfataricus (strain ATCC 35092 / DSM 1617 / JCM 11322 / P2) (Sulfolobus solfataricus) protein is Type-4 uracil-DNA glycosylase.